Reading from the N-terminus, the 297-residue chain is Formylmethanofuran--tetrahydromethanopterin formyltransferase (297 aa).

The protein belongs to the FTR family. In terms of assembly, homotetramer.

The protein localises to the cytoplasm. It catalyses the reaction N-formylmethanofuran + 5,6,7,8-tetrahydromethanopterin + H(+) = N(5)-formyl-5,6,7,8-tetrahydromethanopterin + methanofuran. The protein operates within one-carbon metabolism; methanogenesis from CO(2); 5,10-methenyl-5,6,7,8-tetrahydromethanopterin from CO(2): step 2/3. Its function is as follows. Catalyzes the reversible transfer of a formyl group from formylmethanofuran (formyl-MFR) to tetrahydromethanopterin (H(4)MPT) to produce 5-formyl tetrahydromethanopterin (5-formyl-H(4)MPT) and methanofuran (MFR). This chain is Formylmethanofuran--tetrahydromethanopterin formyltransferase, found in Methanothermobacter thermautotrophicus (strain ATCC 29096 / DSM 1053 / JCM 10044 / NBRC 100330 / Delta H) (Methanobacterium thermoautotrophicum).